The primary structure comprises 87 residues: Putative acyl-CoA-binding protein (87 aa).

An ACB domain is found at Met-1 to Met-86. An acyl-CoA-binding positions include Lys-13, Tyr-28 to Lys-32, Lys-50, Lys-54, and Tyr-73.

It belongs to the ACBP family.

It is found in the cytoplasm. The protein resides in the nucleus. Binds medium- and long-chain acyl-CoA esters with very high affinity and may function as an intracellular carrier of acyl-CoA esters. May enhance the activity of the ceramide synthase complex. In Schizosaccharomyces pombe (strain 972 / ATCC 24843) (Fission yeast), this protein is Putative acyl-CoA-binding protein.